The chain runs to 149 residues: Nucleoside diphosphate kinase (149 aa).

Residues lysine 9, phenylalanine 57, arginine 85, threonine 91, arginine 102, and asparagine 112 each contribute to the ATP site. Histidine 115 acts as the Pros-phosphohistidine intermediate in catalysis.

This sequence belongs to the NDK family. Homotetramer. Mg(2+) is required as a cofactor.

The protein localises to the cytoplasm. It carries out the reaction a 2'-deoxyribonucleoside 5'-diphosphate + ATP = a 2'-deoxyribonucleoside 5'-triphosphate + ADP. It catalyses the reaction a ribonucleoside 5'-diphosphate + ATP = a ribonucleoside 5'-triphosphate + ADP. Its function is as follows. Major role in the synthesis of nucleoside triphosphates other than ATP. The ATP gamma phosphate is transferred to the NDP beta phosphate via a ping-pong mechanism, using a phosphorylated active-site intermediate. The polypeptide is Nucleoside diphosphate kinase (Roseiflexus castenholzii (strain DSM 13941 / HLO8)).